Reading from the N-terminus, the 204-residue chain is GTP cyclohydrolase 1 (204 aa).

Residues cysteine 93, histidine 96, and cysteine 164 each contribute to the Zn(2+) site.

It belongs to the GTP cyclohydrolase I family. In terms of assembly, toroid-shaped homodecamer, composed of two pentamers of five dimers.

It carries out the reaction GTP + H2O = 7,8-dihydroneopterin 3'-triphosphate + formate + H(+). It participates in cofactor biosynthesis; 7,8-dihydroneopterin triphosphate biosynthesis; 7,8-dihydroneopterin triphosphate from GTP: step 1/1. The sequence is that of GTP cyclohydrolase 1 from Rhizobium meliloti (strain 1021) (Ensifer meliloti).